The primary structure comprises 450 residues: Methylenetetrahydrofolate--tRNA-(uracil-5-)-methyltransferase TrmFO (450 aa).

9 to 14 (GGGMAG) contacts FAD.

This sequence belongs to the MnmG family. TrmFO subfamily. FAD is required as a cofactor.

It localises to the cytoplasm. The catalysed reaction is uridine(54) in tRNA + (6R)-5,10-methylene-5,6,7,8-tetrahydrofolate + NADH + H(+) = 5-methyluridine(54) in tRNA + (6S)-5,6,7,8-tetrahydrofolate + NAD(+). It carries out the reaction uridine(54) in tRNA + (6R)-5,10-methylene-5,6,7,8-tetrahydrofolate + NADPH + H(+) = 5-methyluridine(54) in tRNA + (6S)-5,6,7,8-tetrahydrofolate + NADP(+). In terms of biological role, catalyzes the folate-dependent formation of 5-methyl-uridine at position 54 (M-5-U54) in all tRNAs. This Roseobacter denitrificans (strain ATCC 33942 / OCh 114) (Erythrobacter sp. (strain OCh 114)) protein is Methylenetetrahydrofolate--tRNA-(uracil-5-)-methyltransferase TrmFO.